We begin with the raw amino-acid sequence, 353 residues long: Guanine nucleotide-binding protein subunit alpha (353 aa).

Residues 1–21 (MGCGMSTEEKEGKARNEEIEN) form a disordered region. A lipid anchor (N-myristoyl glycine) is attached at Gly2. The S-palmitoyl cysteine moiety is linked to residue Cys3. Basic and acidic residues predominate over residues 7-21 (TEEKEGKARNEEIEN). Residues 32 to 353 (NEIKMLLLGA…QENLRLCGLI (322 aa)) form the G-alpha domain. Positions 35-48 (KMLLLGAGESGKST) are G1 motif. Residues Glu43, Ser44, Gly45, Lys46, Ser47, Thr48, Asp150, Leu175, Thr181, Gly203, Asn269, Lys270, Asp272, and Ala325 each coordinate GTP. Ser47 provides a ligand contact to Mg(2+). Residues 173–181 (DVLRSRVKT) form a G2 motif region. Thr181 contributes to the Mg(2+) binding site. The interval 196–205 (YRMFDVGGQR) is G3 motif. The segment at 265 to 272 (ILFLNKID) is G4 motif. The G5 motif stretch occupies residues 323 to 328 (TCATDT).

It belongs to the G-alpha family. G(q) subfamily. G proteins are composed of 3 units; alpha, beta and gamma. The alpha chain contains the guanine nucleotide binding site. The cofactor is Mg(2+).

Guanine nucleotide-binding proteins (G proteins) are involved as modulators or transducers in various transmembrane signaling systems. Plays a role in pathogenicity, specifically in appressorium formation in rice blast disease. Also involved in mating. The sequence is that of Guanine nucleotide-binding protein subunit alpha (MAGB) from Pyricularia oryzae (strain 70-15 / ATCC MYA-4617 / FGSC 8958) (Rice blast fungus).